Reading from the N-terminus, the 456-residue chain is Outer membrane protein assembly factor BamB (456 aa).

An N-terminal signal peptide occupies residues 1–19 (MKKLLFITAPLLLSVLTAS). Cys20 is lipidated: N-palmitoyl cysteine. Cys20 carries S-diacylglycerol cysteine lipidation.

It belongs to the BamB family. As to quaternary structure, part of the Bam complex.

It localises to the cell outer membrane. In terms of biological role, part of the outer membrane protein assembly complex, which is involved in assembly and insertion of beta-barrel proteins into the outer membrane. The chain is Outer membrane protein assembly factor BamB from Francisella tularensis subsp. tularensis (strain SCHU S4 / Schu 4).